A 128-amino-acid chain; its full sequence is Gastrotropin (128 aa).

The residue at position 2 (alanine 2) is an N-acetylalanine.

The protein belongs to the calycin superfamily. Fatty-acid binding protein (FABP) family. In terms of tissue distribution, predominantly expressed in ileum; also expressed in ovary.

It is found in the cytoplasm. Its subcellular location is the membrane. In terms of biological role, binds to bile acids and is involved in enterohepatic bile acid metabolism. Required for efficient apical to basolateral transport of conjugated bile acids in ileal enterocytes. Stimulates gastric acid and pepsinogen secretion. This chain is Gastrotropin (Fabp6), found in Rattus norvegicus (Rat).